The primary structure comprises 837 residues: Zinc fingers and homeoboxes protein 2 (837 aa).

The disordered stretch occupies residues 1–41 (MASKRKSTTPCMVRTSQVVEQDVPEEVDRAKEKGIGTPQPD). Residues 27–77 (VDRAKEKGIGTPQPDVAKDCWAAELENSSKENEVIEVKSMGESQSKKLQGG) are interaction with EFNB1. Position 37 is a phosphothreonine (T37). K64 participates in a covalent cross-link: Glycyl lysine isopeptide (Lys-Gly) (interchain with G-Cter in SUMO2). C2H2-type zinc fingers lie at residues 78 to 101 (YECKYCPYSTQNLNEFTEHVDMQH) and 110 to 133 (YVCAECNFTTKKYDSLSDHNSKFH). Residues 167–180 (TSGPGTGDSDSGIS) are compositionally biased toward low complexity. The tract at residues 167–203 (TSGPGTGDSDSGISVSKTPIMKPGKPKADAKKVPKKP) is disordered. Positions 192-203 (PKADAKKVPKKP) are enriched in basic and acidic residues. The interval 195 to 358 (DAKKVPKKPE…PAQLAPTKVT (164 aa)) is required for homodimerization. DNA-binding regions (homeobox) lie at residues 263–324 (NTTK…WSPE), 439–501 (TPAS…IVHI), 530–591 (PQKF…EQAV), and 628–690 (SPSP…TVKW). Positions 263-446 (NTTKYNSALD…PLTPASDRKK (184 aa)) are required for repressor activity. Residues 263 to 497 (NTTKYNSALD…SDHRYRCQRG (235 aa)) are required for interaction with NFYA. Residues 317 to 446 (HGISWSPEEV…PLTPASDRKK (130 aa)) are required for nuclear localization. Positions 404–445 (GQKRPLVTPQAAPEPKRPHIAQVPEPPPKVANPPLTPASDRK) are disordered. Residues 427-439 (PEPPPKVANPPLT) are compositionally biased toward pro residues. Residue K455 forms a Glycyl lysine isopeptide (Lys-Gly) (interchain with G-Cter in SUMO2) linkage. Residues 754 to 837 (EPAKDCLPAK…DCVPAEAGQA (84 aa)) are disordered. A phosphoserine mark is found at S825 and S827.

This sequence belongs to the ZHX family. In terms of assembly, homodimer (via homeobox domain 1). Heterodimer with ZHX1 (via homeobox domain 1). Heterodimer with ZHX3 (via homeobox domain 1). Heterodimerization with ZHX1 is not necessary for repressor activity. Interacts (via homeobox domain) with NFYA (via N-terminus). Interacts with EFNB1 intracellular domain peptide; the interaction enhances ZHX2 transcriptional repression activity.

It localises to the nucleus. Functionally, acts as a transcriptional repressor. Represses the promoter activity of the CDC25C gene stimulated by NFYA. May play a role in retinal development where it regulates the composition of bipolar cell populations, by promoting differentiation of bipolar OFF-type cells. In the brain, may promote maintenance and suppress differentiation of neural progenitor cells in the developing cortex. The sequence is that of Zinc fingers and homeoboxes protein 2 (ZHX2) from Pongo abelii (Sumatran orangutan).